A 132-amino-acid polypeptide reads, in one-letter code: AP-2 complex subunit sigma (132 aa).

This sequence belongs to the adaptor complexes small subunit family. As to quaternary structure, adaptor protein complex 2 (AP-2) is a heterotetramer composed of two large adaptins (alpha-type and beta-type subunits), a medium adaptin (mu-type subunit AP50) and a small adaptin (sigma-type subunit AP17). In terms of tissue distribution, widely expressed in the embryo, endosperm, leaf and root.

The protein localises to the cell membrane. It localises to the membrane. Its subcellular location is the coated pit. In terms of biological role, component of the adaptor complexes which link clathrin to receptors in coated vesicles. Clathrin-associated protein complexes are believed to interact with the cytoplasmic tails of membrane proteins, leading to their selection and concentration. AP2S1/AP17 is a subunit of the plasma membrane adaptor. The complex binds polyphosphoinositides. This chain is AP-2 complex subunit sigma (AP-17), found in Zea mays (Maize).